We begin with the raw amino-acid sequence, 2696 residues long: Protein ILITYHIA (2696 aa).

Over residues 1–18 the composition is skewed to polar residues; it reads MSYSMVNASSAVSSPETA. A disordered region spans residues 1–26; the sequence is MSYSMVNASSAVSSPETAKNSDEPPP. 9 HEAT repeats span residues 162–204, 253–290, 303–340, 364–400, 401–438, 487–525, 526–562, 564–601, and 642–677; these read DIAP…MKTF, STQA…IYSL, KDSP…DVLN, EFQT…IDLS, KYAL…KSSN, SLSR…RSSV, AIQP…NPDT, SQIS…SKIA, and VVCV…FLLC. Positions 901–941 are disordered; that stretch reads KQEPSSNHSLKKGLASRETANSGRRDTAKLTKKADKGKTAK. Residues 923–941 are compositionally biased toward basic and acidic residues; it reads GRRDTAKLTKKADKGKTAK. HEAT repeat units follow at residues 985–1021, 1082–1118, 1188–1225, 1273–1311, 1315–1355, 1358–1395, 1397–1433, 1436–1474, 1478–1515, 1516–1553, 1564–1600, 1601–1638, 1640–1677, 1683–1720, 1722–1759, 1761–1797, 1801–1838, and 1840–1876; these read HSQL…CTVQ, DTFT…GLQA, HDLG…ESPS, KDLP…KHGK, SLLF…HLAR, PKVH…SKQE, APAL…GFGI, LKKY…KLGK, PYVI…QLSA, YGVK…CAPQ, PKLT…VIKN, PEIS…NSVD, PSLA…LVTE, PYIG…GMGE, NFPD…ALGT, YFEN…SLGA, KYLQ…HHAT, and SLPL…KVAG. A Phosphoserine modification is found at Ser-1887. 19 HEAT repeats span residues 1908–1945, 1949–1986, 1988–2024, 2029–2066, 2067–2102, 2104–2137, 2138–2175, 2177–2213, 2217–2254, 2258–2292, 2293–2330, 2335–2373, 2377–2414, 2416–2450, 2455–2492, 2494–2530, 2536–2573, 2580–2617, and 2620–2658; these read DKRN…NTPK, EIMP…KLGE, VLPL…SAGR, SFMD…SAGL, QAMD…VRTA, VLPH…AGFN, THLG…VIDE, GVET…SSKL, DEAP…SVPK, PSYI…LCLP, KSLK…VTSE, EFVI…RGGM, PFLP…LSTR, DPLV…HAGK, AVRV…YLEA, QLSV…HNPS, SLFS…KQLA, KVVI…DNPS, and MANI…LTKG.

Belongs to the GCN1 family.

Functionally, involved in immunity against bacterial infection and in non-host resistance. Required for embryo development. Required for systemic acquired resistance, but functions in an salicylic acid-independent manner. Required for bacterium-triggered stomatal closure response. This is Protein ILITYHIA from Arabidopsis thaliana (Mouse-ear cress).